Reading from the N-terminus, the 466-residue chain is Ribulose bisphosphate carboxylase/oxygenase activase, chloroplastic (466 aa).

The N-terminal 48 residues, 1–48, are a transit peptide targeting the chloroplast; it reads MAAAFSSTVGAPASTPTNFLGKKLKKQVTSAVNYHGKSSNINRFKVMA. Residue 156–163 coordinates ATP; sequence GGKGQGKS. Residues 429 to 454 form a disordered region; the sequence is QGAQQAGNLPVPEGCTDPVAKNFDPT.

The protein belongs to the RuBisCO activase family.

It is found in the plastid. The protein resides in the chloroplast stroma. Its function is as follows. Activation of RuBisCO (ribulose-1,5-bisphosphate carboxylase/oxygenase; EC 4.1.1.39) involves the ATP-dependent carboxylation of the epsilon-amino group of lysine leading to a carbamate structure. The protein is Ribulose bisphosphate carboxylase/oxygenase activase, chloroplastic (RCA) of Oryza sativa subsp. japonica (Rice).